The following is a 357-amino-acid chain: Protein-glutamate methylesterase/protein-glutamine glutaminase 1 (357 aa).

The Response regulatory domain occupies 10-127 (RTLIVDDSAF…DVNKIEKELV (118 aa)). Aspartate 61 carries the post-translational modification 4-aspartylphosphate. Positions 159 to 353 (SCAGDFAVLI…EEIVRMSEVK (195 aa)) constitute a CheB-type methylesterase domain. Catalysis depends on residues serine 171, histidine 198, and aspartate 295.

It belongs to the CheB family. Phosphorylated by CheA. Phosphorylation of the N-terminal regulatory domain activates the methylesterase activity.

It localises to the cytoplasm. It carries out the reaction [protein]-L-glutamate 5-O-methyl ester + H2O = L-glutamyl-[protein] + methanol + H(+). It catalyses the reaction L-glutaminyl-[protein] + H2O = L-glutamyl-[protein] + NH4(+). Its function is as follows. Involved in chemotaxis. Part of a chemotaxis signal transduction system that modulates chemotaxis in response to various stimuli. Catalyzes the demethylation of specific methylglutamate residues introduced into the chemoreceptors (methyl-accepting chemotaxis proteins or MCP) by CheR. Also mediates the irreversible deamidation of specific glutamine residues to glutamic acid. The protein is Protein-glutamate methylesterase/protein-glutamine glutaminase 1 of Methanosarcina mazei (strain ATCC BAA-159 / DSM 3647 / Goe1 / Go1 / JCM 11833 / OCM 88) (Methanosarcina frisia).